Consider the following 1176-residue polypeptide: Histidine kinase 2 (1176 aa).

Residues 1–29 (MSITCELLNLTSKKAKKSSSSDKKWLKKP) are Cytoplasmic-facing. A helical membrane pass occupies residues 30-50 (LFFLILCGSLVIVLVMFLRLG). At 51-174 (RSQKEETDSC…LEQGLSSYLR (124 aa)) the chain is on the extracellular side. Residues 175–195 (NAWWCLILGVLVCHKIYVSHS) form a helical membrane-spanning segment. Topologically, residues 196–232 (KARGERKEKVHLQEALAPKKQQQRAQTSSRGAGRWRK) are cytoplasmic. The helical transmembrane segment at 233-253 (NILLLGILGGVSFSVWWFWDT) threads the bilayer. Topologically, residues 254–536 (NEEIIMKRRE…CRFKHKLPIP (283 aa)) are extracellular. A CHASE domain is found at 302–526 (IPSAIDQRTF…GDPSRNHEMH (225 aa)). A helical transmembrane segment spans residues 537–557 (WTAITPSILVLVITFLVGYIL). At 558 to 1176 (YEAINRIATV…TAVARFFEPC (619 aa)) the chain is on the cytoplasmic side. One can recognise a Histidine kinase domain in the interval 594 to 867 (TVSHEIRTPM…TFSFTGVFGK (274 aa)). At His-597 the chain carries Phosphohistidine; by autocatalysis. Response regulatory domains lie at 891–1013 (RALV…QETL) and 1036–1173 (QILV…ARFF). 2 positions are modified to 4-aspartylphosphate: Asp-942 and Asp-1086.

Self-interacts. Interacts with AHK3, AHP1, AHP2, AHP3, AHP5, ATAF2, AT2S3, BETAA-AD, CYP20-2, DRP1A, HIR1, HIR2, PI4KB1, PI4KG5 and At4g12060. In terms of processing, autophosphorylated predominantly on His residues. Activation probably requires a transfer of a phosphate group between a His in the transmitter domain and an Asp of the receiver domain. Expressed in roots, leaves and flowers, mostly in the vascular tissues. Present in seedlings.

Its subcellular location is the endoplasmic reticulum membrane. The catalysed reaction is ATP + protein L-histidine = ADP + protein N-phospho-L-histidine.. Activated by cytokinins to initiate phosphorelay signaling. In terms of biological role, cytokinins (CK) receptor related to bacterial two-component regulators. Functions as a histidine kinase and transmits the stress signal to a downstream MAPK cascade. This protein undergoes an ATP-dependent autophosphorylation at a conserved histidine residue in the kinase core, and a phosphoryl group is then transferred to a conserved aspartate residue in the receiver domain. In the presence of cytokinin, feeds phosphate to phosphorelay-integrating histidine phosphotransfer protein (HPt) and activates subsequent cascade. Involved in meristems establishment in seedlings. Redundant negative regulator of drought and salt stress responses and abscisic acid (ABA) signaling. Together with AHK3, plays a negative regulatory role in cold stress signaling via inhibition of ABA response, occurring independently of the cold acclimation pathway. Redundant positive regulator of cytokinin signaling that regulates many developmental processes including seed germination, cell division, seed size, chlorophyll retention during leaf senescence, root repression and shoot promotion. Involved in alkamides (e.g. N-isobutyl decanamide) and N-acylethanolamides (NAE) signaling that control meristematic activity and differentiation processes during plant development. Contributes to vascular bundle formation and secondary growth in a cytokinin-dependent manner, probably by promoting the maintenance of mitotic activity and/or identity of procambial cells. Together with AHK4, required for growth and reproduction promotion stimulated by the endophytic fungus Piriformospora indica in a trans-zeatin-dependent manner. Required by the cytokinin-dependent flower development regulation pathway. This chain is Histidine kinase 2 (AHK2), found in Arabidopsis thaliana (Mouse-ear cress).